A 73-amino-acid chain; its full sequence is Kappa-scoloptoxin(03)-Ssm1c (73 aa).

A signal peptide spans 1 to 23; the sequence is MKSWMAILLVMALIIFTLDNCYS. 3 disulfides stabilise this stretch: Cys32–Cys58, Cys41–Cys57, and Cys44–Cys67.

This sequence belongs to the scoloptoxin family. Expressed by the venom gland.

Its subcellular location is the secreted. In terms of biological role, inhibits voltage-gated potassium channels. The protein is Kappa-scoloptoxin(03)-Ssm1c of Scolopendra mutilans (Chinese red-headed centipede).